Here is a 778-residue protein sequence, read N- to C-terminus: Lon protease (778 aa).

Positions 6–207 constitute a Lon N-terminal domain; the sequence is LPLMALRDMV…TVISTLTSNI (202 aa). 356–363 provides a ligand contact to ATP; it reads GPPGVGKT. The Lon proteolytic domain occupies 592 to 773; that stretch reads EDQIGSTTGL…DQVLKHALVE (182 aa). Residues Ser679 and Lys722 contribute to the active site.

Belongs to the peptidase S16 family. As to quaternary structure, homohexamer. Organized in a ring with a central cavity.

Its subcellular location is the cytoplasm. It carries out the reaction Hydrolysis of proteins in presence of ATP.. In terms of biological role, ATP-dependent serine protease that mediates the selective degradation of mutant and abnormal proteins as well as certain short-lived regulatory proteins. Required for cellular homeostasis and for survival from DNA damage and developmental changes induced by stress. Degrades polypeptides processively to yield small peptide fragments that are 5 to 10 amino acids long. Binds to DNA in a double-stranded, site-specific manner. The sequence is that of Lon protease from Rickettsia felis (strain ATCC VR-1525 / URRWXCal2) (Rickettsia azadi).